A 152-amino-acid chain; its full sequence is Mediator of RNA polymerase II transcription subunit 9 (152 aa).

Positions 98 to 150 form a coiled coil; sequence IKRCKALLQENEEVRNLLANSIEEWENIIADKEQQLRVKAKVLRDLDARIEKI.

The protein belongs to the Mediator complex subunit 9 family. Component of the Mediator complex.

The protein localises to the nucleus. In terms of biological role, component of the Mediator complex, a coactivator involved in the regulated transcription of nearly all RNA polymerase II-dependent genes. Mediator functions as a bridge to convey information from gene-specific regulatory proteins to the basal RNA polymerase II transcription machinery. Mediator is recruited to promoters by direct interactions with regulatory proteins and serves as a scaffold for the assembly of a functional preinitiation complex with RNA polymerase II and the general transcription factors. In Candida glabrata (strain ATCC 2001 / BCRC 20586 / JCM 3761 / NBRC 0622 / NRRL Y-65 / CBS 138) (Yeast), this protein is Mediator of RNA polymerase II transcription subunit 9 (CSE2).